The sequence spans 721 residues: uncharacterized protein (721 aa).

2 disordered regions span residues 196 to 291 (TSMT…VGGP) and 370 to 513 (AGIP…AAEQ). Low complexity-rich tracts occupy residues 202 to 224 (SPAG…TSGP) and 232 to 250 (SPFG…SSGP). Composition is skewed to pro residues over residues 264–283 (PMPP…PPSA) and 379–389 (APTPSPAPIAP). Positions 419-429 (APAGPLPAYGA) are enriched in low complexity. Residues 435-446 (VTTPPATPPTPT) are compositionally biased toward pro residues. Positions 470-484 (VNKSTAPATTQAQPS) are enriched in polar residues. Residues 491–505 (ASATAAATTGAAAGD) are compositionally biased toward low complexity.

This is an uncharacterized protein from Mycobacterium tuberculosis (strain ATCC 25618 / H37Rv).